We begin with the raw amino-acid sequence, 475 residues long: Peroxisome proliferator-activated receptor gamma (475 aa).

Threonine 54 is a glycosylation site (O-linked (GlcNAc) threonine). Phosphoserine; by MAPK is present on serine 82. The segment at residues 106–180 (AIECRVCGDK…VGMSHNAIRF (75 aa)) is a DNA-binding region (nuclear receptor). 2 NR C4-type zinc fingers span residues 109–129 (CRVCGDKASGFHYGVHACEGC) and 146–168 (CDLNCRIHKKSRNKCQYCRFQKC). The interval 175-250 (HNAIRFGRMP…DKSPFVIYDM (76 aa)) is interaction with FAM120B. The NR LBD domain occupies 208 to 473 (DLRALAKHLY…HPLLQEIYKD (266 aa)). Lysine 222 participates in a covalent cross-link: Glycyl lysine isopeptide (Lys-Gly) (interchain with G-Cter in ubiquitin). The 9aaTAD motif lies at 465–473 (PLLQEIYKD).

This sequence belongs to the nuclear hormone receptor family. NR1 subfamily. In terms of assembly, interacts with FOXO1 (acetylated form). Heterodimer with other nuclear receptors, such as RXRA. The heterodimer with the retinoic acid receptor RXRA is called adipocyte-specific transcription factor ARF6. Interacts with NCOA6 coactivator, leading to a strong increase in transcription of target genes. Interacts with coactivator PPARBP, leading to a mild increase in transcription of target genes. Interacts with NOCA7 in a ligand-inducible manner. Interacts with NCOA1 and NCOA2 LXXLL motifs. Interacts with ASXL1, ASXL2, DNTTIP2, FAM120B, MAP2K1/MEK1, NR0B2, PDPK1, PRDM16, PRMT2 and TGFB1I1. Interacts (when activated by agonist) with PPP5C. Interacts with HELZ2 and THRAP3; the interaction stimulates the transcriptional activity of PPARG. Interacts with PER2, the interaction is ligand dependent and blocks PPARG recruitment to target promoters. Interacts with NOCT. Interacts with ACTN4. Interacts (when in the liganded conformation) with GPS2. Interacts with CRY1 and CRY2 in a ligand-dependent manner. In the absence of hormonal ligand, interacts with TACC1. In macrophages, interacts with PAQR3 and STUB1; the interactions promote PPARG poylubiquitination and STUB1-mediated degradation. In terms of processing, O-GlcNAcylation at Thr-54 reduces transcriptional activity in adipocytes. Phosphorylated at basal conditions and dephosphorylated when treated with the ligand. May be dephosphorylated by PPP5C. The phosphorylated form may be inactive and dephosphorylation induces adipogenic activity. Post-translationally, ubiquitinated by E3 ubiquitin-protein ligase complex containing FBXO9; leading to proteasomal degradation. Ubiquitinated at Lys-222 by TRIM55 leading to proteasomal degradation. Ubiquitinated by E3 ubiquitin-protein ligase STUB1/CHIP; leading to proteasomal degradation.

The protein resides in the nucleus. Its subcellular location is the cytoplasm. With respect to regulation, PDPK1 activates its transcriptional activity independently of its kinase activity. Interacts with HELZ2 and THRAP3; the interaction enhances the transcriptional activity of PPARG. Its function is as follows. Nuclear receptor that binds peroxisome proliferators such as hypolipidemic drugs and fatty acids. Once activated by a ligand, the nuclear receptor binds to DNA specific PPAR response elements (PPRE) and modulates the transcription of its target genes, such as acyl-CoA oxidase. It therefore controls the peroxisomal beta-oxidation pathway of fatty acids. Key regulator of adipocyte differentiation and glucose homeostasis. ARF6 acts as a key regulator of the tissue-specific adipocyte P2 (aP2) enhancer. Acts as a critical regulator of gut homeostasis by suppressing NF-kappa-B-mediated pro-inflammatory responses. Plays a role in the regulation of cardiovascular circadian rhythms by regulating the transcription of BMAL1 in the blood vessels. This Cricetulus griseus (Chinese hamster) protein is Peroxisome proliferator-activated receptor gamma (PPARG).